We begin with the raw amino-acid sequence, 246 residues long: Large ribosomal subunit protein uL3 (246 aa).

An N5-methylglutamine modification is found at Q151.

It belongs to the universal ribosomal protein uL3 family. As to quaternary structure, part of the 50S ribosomal subunit. Forms a cluster with proteins L14 and L19. In terms of processing, methylated by PrmB.

One of the primary rRNA binding proteins, it binds directly near the 3'-end of the 23S rRNA, where it nucleates assembly of the 50S subunit. This Bartonella quintana (strain Toulouse) (Rochalimaea quintana) protein is Large ribosomal subunit protein uL3.